Reading from the N-terminus, the 335-residue chain is Pyridoxal 5'-phosphate synthase subunit PdxS (335 aa).

D30 contacts D-ribose 5-phosphate. Residue K87 is the Schiff-base intermediate with D-ribose 5-phosphate of the active site. G159 contacts D-ribose 5-phosphate. R171 is a binding site for D-glyceraldehyde 3-phosphate. Residues G257 and 278-279 (GS) each bind D-ribose 5-phosphate.

It belongs to the PdxS/SNZ family. In terms of assembly, homohexamer. In the presence of PdxT, forms a dodecamer of heterodimers.

It catalyses the reaction aldehydo-D-ribose 5-phosphate + D-glyceraldehyde 3-phosphate + L-glutamine = pyridoxal 5'-phosphate + L-glutamate + phosphate + 3 H2O + H(+). It functions in the pathway cofactor biosynthesis; pyridoxal 5'-phosphate biosynthesis. Catalyzes the formation of pyridoxal 5'-phosphate from ribose 5-phosphate (RBP), glyceraldehyde 3-phosphate (G3P) and ammonia. The ammonia is provided by the PdxT subunit. Can also use ribulose 5-phosphate and dihydroxyacetone phosphate as substrates, resulting from enzyme-catalyzed isomerization of RBP and G3P, respectively. This is Pyridoxal 5'-phosphate synthase subunit PdxS from Pyrococcus horikoshii (strain ATCC 700860 / DSM 12428 / JCM 9974 / NBRC 100139 / OT-3).